The primary structure comprises 570 residues: Formate--tetrahydrofolate ligase (570 aa).

Residue 65–72 (TPHGEGKT) participates in ATP binding.

The protein belongs to the formate--tetrahydrofolate ligase family.

The catalysed reaction is (6S)-5,6,7,8-tetrahydrofolate + formate + ATP = (6R)-10-formyltetrahydrofolate + ADP + phosphate. Its pathway is one-carbon metabolism; tetrahydrofolate interconversion. The protein is Formate--tetrahydrofolate ligase of Shewanella sp. (strain ANA-3).